The primary structure comprises 295 residues: Light-independent protochlorophyllide reductase iron-sulfur ATP-binding protein (295 aa).

Residues 39–44 (GIGKST) and Lys-68 contribute to the ATP site. Mg(2+) is bound at residue Ser-43. The [4Fe-4S] cluster site is built by Cys-124 and Cys-158. Residue 209-210 (NR) coordinates ATP.

It belongs to the NifH/BchL/ChlL family. As to quaternary structure, homodimer. Protochlorophyllide reductase is composed of three subunits; ChlL, ChlN and ChlB. The cofactor is [4Fe-4S] cluster.

The enzyme catalyses chlorophyllide a + oxidized 2[4Fe-4S]-[ferredoxin] + 2 ADP + 2 phosphate = protochlorophyllide a + reduced 2[4Fe-4S]-[ferredoxin] + 2 ATP + 2 H2O. It functions in the pathway porphyrin-containing compound metabolism; chlorophyll biosynthesis (light-independent). In terms of biological role, component of the dark-operative protochlorophyllide reductase (DPOR) that uses Mg-ATP and reduced ferredoxin to reduce ring D of protochlorophyllide (Pchlide) to form chlorophyllide a (Chlide). This reaction is light-independent. The L component serves as a unique electron donor to the NB-component of the complex, and binds Mg-ATP. The protein is Light-independent protochlorophyllide reductase iron-sulfur ATP-binding protein of Prochlorococcus marinus (strain MIT 9215).